We begin with the raw amino-acid sequence, 429 residues long: Saccharopine dehydrogenase-like oxidoreductase (429 aa).

Ala-2 is modified (N-acetylalanine). Residues Ser-209, Ser-215, and Ser-217 each carry the phosphoserine modification.

The protein belongs to the saccharopine dehydrogenase family.

The sequence is that of Saccharopine dehydrogenase-like oxidoreductase (Sccpdh) from Mus musculus (Mouse).